Reading from the N-terminus, the 403-residue chain is 3-hydroxy-3-methylglutaryl-coenzyme A reductase (403 aa).

Residues glutamate 99 and aspartate 303 each act as charge relay system in the active site. Residue histidine 398 is the Proton donor of the active site.

The protein belongs to the HMG-CoA reductase family.

It carries out the reaction (R)-mevalonate + 2 NADP(+) + CoA = (3S)-3-hydroxy-3-methylglutaryl-CoA + 2 NADPH + 2 H(+). It functions in the pathway metabolic intermediate biosynthesis; (R)-mevalonate biosynthesis; (R)-mevalonate from acetyl-CoA: step 3/3. With respect to regulation, is competitively inhibited by (R)-HMG-CoA and lovastatin (formerly called mevinolin). Functionally, catalyzes the NADPH-dependent reductive deacylation of (S)-3-hydroxy-3-methylglutaryl-CoA (HMG-CoA) to (R)-mevalonate. Functions in the mevalonate (MVA) pathway leading to isopentenyl diphosphate (IPP), a key precursor for the biosynthesis of isoprenoid compounds such as archaeal membrane lipids. Is also able to catalyze the reduction of mevaldehyde to mevalonate and the oxidative acylation of mevaldehyde to HMG-CoA. The protein is 3-hydroxy-3-methylglutaryl-coenzyme A reductase (hmgA) of Haloferax volcanii (strain ATCC 29605 / DSM 3757 / JCM 8879 / NBRC 14742 / NCIMB 2012 / VKM B-1768 / DS2) (Halobacterium volcanii).